The sequence spans 465 residues: MTSMASLFSFTSPAVKRLLGWKQGDEEEKWAEKAVDALVKKLKKKKGAMEELEKALSSPGQPSKCVTIPRSLDGRLQVSHRKGLPHVIYCRVWRWPDLQSHHELKPLDICEFPFGSKQKEVCINPYHYKRVESPVLPPVLVPRHSEFNPQHSLLVQFRNLSHNEPHMPHNATFPDSFQQPNSTPFSISPNSPYPPSPASSTYPSSPASSGPSSPFQLPADTPPPAYMPPDDQMGQDNSQSMDTSNTMIPQIMPNISTRDVQPVAYEEPKHWCSIVYYELNNRVGEAFHASSTSVLVDGFTDPSNNKNRFCLGLLSNVNRNSTIENTRRHIGKGVHLYYVGGEVYAECLSDSSIFVQSRNCNYHHGFHPTTVCKIPSGCSLKIFNNQEFAQLLAQSVNHGFEAVYELTKMCTIRMSFVKGWGAEYHRQDVTSTPCWIEIHLHGPLQWLDKVLTQMGSPLNPISSVS.

Residues 13-137 (PAVKRLLGWK…YKRVESPVLP (125 aa)) enclose the MH1 domain. Zn(2+)-binding residues include Cys-65, Cys-110, Cys-122, and His-127. A disordered region spans residues 163–242 (NEPHMPHNAT…MGQDNSQSMD (80 aa)). Positions 173 to 183 (FPDSFQQPNST) are enriched in polar residues. The segment covering 198-214 (ASSTYPSSPASSGPSSP) has biased composition (low complexity). Positions 271–465 (WCSIVYYELN…SPLNPISSVS (195 aa)) constitute an MH2 domain.

It belongs to the dwarfin/SMAD family. As to quaternary structure, may form trimers with the co-SMAD SMAD4.

Its subcellular location is the cytoplasm. It is found in the nucleus. Its function is as follows. Transcriptional modulator activated by BMP (bone morphogenetic proteins) type 1 receptor kinase. SMAD5 is a receptor-regulated SMAD (R-SMAD). This Gallus gallus (Chicken) protein is Mothers against decapentaplegic homolog 5 (SMAD5).